A 430-amino-acid polypeptide reads, in one-letter code: Glutamate-1-semialdehyde 2,1-aminomutase (430 aa).

At lysine 269 the chain carries N6-(pyridoxal phosphate)lysine.

It belongs to the class-III pyridoxal-phosphate-dependent aminotransferase family. HemL subfamily. In terms of assembly, homodimer. Pyridoxal 5'-phosphate is required as a cofactor.

The protein resides in the cytoplasm. The catalysed reaction is (S)-4-amino-5-oxopentanoate = 5-aminolevulinate. Its pathway is porphyrin-containing compound metabolism; protoporphyrin-IX biosynthesis; 5-aminolevulinate from L-glutamyl-tRNA(Glu): step 2/2. This Desulfitobacterium hafniense (strain Y51) protein is Glutamate-1-semialdehyde 2,1-aminomutase.